The primary structure comprises 323 residues: Putative ABC transporter substrate-binding lipoprotein YhfQ (323 aa).

The signal sequence occupies residues 1–19 (MKKTLIILTVLLLSVLTAA). Cysteine 20 carries N-palmitoyl cysteine lipidation. The S-diacylglycerol cysteine moiety is linked to residue cysteine 20. In terms of domain architecture, Fe/B12 periplasmic-binding spans 51–322 (RVVVLELGFI…ELQKEMPAAK (272 aa)).

The protein belongs to the bacterial solute-binding protein 8 family. Interacts with FloT.

It localises to the cell membrane. It is found in the membrane raft. The sequence is that of Putative ABC transporter substrate-binding lipoprotein YhfQ (yhfQ) from Bacillus subtilis (strain 168).